Reading from the N-terminus, the 381-residue chain is Neuropeptide Y receptor type 2 (381 aa).

The segment at 1–37 (MGPVGAEADENQTVEVKVEPYGPGHTTPRGELPPDPE) is disordered. Over 1-51 (MGPVGAEADENQTVEVKVEPYGPGHTTPRGELPPDPEPELIDSTKLVEVQV) the chain is Extracellular. N-linked (GlcNAc...) asparagine glycosylation occurs at Asn-11. The helical transmembrane segment at 52–72 (ILILAYCSIILLGVVGNSLVI) threads the bilayer. Over 73–86 (HVVIKFKSMRTVTN) the chain is Cytoplasmic. The chain crosses the membrane as a helical span at residues 87 to 107 (FFIANLAVADLLVNTLCLPFT). The Extracellular portion of the chain corresponds to 108–124 (LTYTLMGEWKMGPVLCH). The cysteines at positions 123 and 203 are disulfide-linked. Residues 125-145 (LVPYAQGLAVQVSTITLTVIA) form a helical membrane-spanning segment. The Cytoplasmic portion of the chain corresponds to 146 to 165 (LDRHRCIVYHLESKISKRIS). The helical transmembrane segment at 166-186 (FLIIGLAWGISALLASPLAIF) threads the bilayer. Residues 187 to 216 (REYSLIEIIPDFEIVACTEKWPGEEKSVYG) are Extracellular-facing. A helical membrane pass occupies residues 217 to 237 (TVYSLSTLLILYVLPLGIISF). Over 238 to 268 (SYTRIWSKLRNHVSPGAASDHYHQRRHKMTK) the chain is Cytoplasmic. The chain crosses the membrane as a helical span at residues 269–289 (MLVCVVVVFAVSWLPLHAFQL). At 290-304 (AVDIDSHVLDLKEYK) the chain is on the extracellular side. Residues 305–325 (LIFTVFHIIAMCSTFANPLLY) traverse the membrane as a helical segment. Residues 326 to 381 (GWMNSNYRKAFLSAFRCEQRLDAIHSEVSMTFKAKKNLEVKKNNGPTDSFSEATNV) are Cytoplasmic-facing. Cys-342 carries S-palmitoyl cysteine lipidation.

The protein belongs to the G-protein coupled receptor 1 family.

It is found in the cell membrane. Receptor for neuropeptide Y and peptide YY. This chain is Neuropeptide Y receptor type 2 (Npy2r), found in Mus musculus (Mouse).